Consider the following 41-residue polypeptide: Photosystem I reaction center subunit IX (41 aa).

Residues 7-27 (YLSTAPVITAIWLGITAGILI) form a helical membrane-spanning segment.

This sequence belongs to the PsaJ family.

The protein resides in the cellular thylakoid membrane. Its function is as follows. May help in the organization of the PsaE and PsaF subunits. This chain is Photosystem I reaction center subunit IX, found in Cyanothece sp. (strain PCC 7425 / ATCC 29141).